Reading from the N-terminus, the 357-residue chain is S-adenosylmethionine:tRNA ribosyltransferase-isomerase (357 aa).

The protein belongs to the QueA family. Monomer.

It localises to the cytoplasm. It carries out the reaction 7-aminomethyl-7-carbaguanosine(34) in tRNA + S-adenosyl-L-methionine = epoxyqueuosine(34) in tRNA + adenine + L-methionine + 2 H(+). It functions in the pathway tRNA modification; tRNA-queuosine biosynthesis. Functionally, transfers and isomerizes the ribose moiety from AdoMet to the 7-aminomethyl group of 7-deazaguanine (preQ1-tRNA) to give epoxyqueuosine (oQ-tRNA). This Buchnera aphidicola subsp. Schizaphis graminum (strain Sg) protein is S-adenosylmethionine:tRNA ribosyltransferase-isomerase.